The chain runs to 129 residues: Large ribosomal subunit protein bL17 (129 aa).

This sequence belongs to the bacterial ribosomal protein bL17 family. As to quaternary structure, part of the 50S ribosomal subunit. Contacts protein L32.

In Stutzerimonas stutzeri (strain A1501) (Pseudomonas stutzeri), this protein is Large ribosomal subunit protein bL17.